Consider the following 388-residue polypeptide: 3-dehydroquinate synthase (388 aa).

NAD(+) is bound by residues 85 to 90 (DGEQYK), 119 to 123 (GVIGD), 143 to 144 (TT), Lys-156, Lys-165, and 183 to 186 (TLKT). Zn(2+) is bound by residues Glu-198, His-261, and His-278.

It belongs to the sugar phosphate cyclases superfamily. Dehydroquinate synthase family. Requires Co(2+) as cofactor. It depends on Zn(2+) as a cofactor. The cofactor is NAD(+).

It is found in the cytoplasm. It carries out the reaction 7-phospho-2-dehydro-3-deoxy-D-arabino-heptonate = 3-dehydroquinate + phosphate. Its pathway is metabolic intermediate biosynthesis; chorismate biosynthesis; chorismate from D-erythrose 4-phosphate and phosphoenolpyruvate: step 2/7. Its function is as follows. Catalyzes the conversion of 3-deoxy-D-arabino-heptulosonate 7-phosphate (DAHP) to dehydroquinate (DHQ). This is 3-dehydroquinate synthase from Psychrobacter arcticus (strain DSM 17307 / VKM B-2377 / 273-4).